The following is a 264-amino-acid chain: Thymidylate synthase (264 aa).

Arg-21 is a dUMP binding site. (6R)-5,10-methylene-5,6,7,8-tetrahydrofolate is bound at residue His-51. 126 to 127 (RR) provides a ligand contact to dUMP. Cys-146 functions as the Nucleophile in the catalytic mechanism. DUMP-binding positions include 166–169 (RSAD), Asn-177, and 207–209 (HIY). (6R)-5,10-methylene-5,6,7,8-tetrahydrofolate is bound at residue Asp-169. Position 263 (Ala-263) interacts with (6R)-5,10-methylene-5,6,7,8-tetrahydrofolate.

The protein belongs to the thymidylate synthase family. Bacterial-type ThyA subfamily. In terms of assembly, homodimer.

It localises to the cytoplasm. The enzyme catalyses dUMP + (6R)-5,10-methylene-5,6,7,8-tetrahydrofolate = 7,8-dihydrofolate + dTMP. It participates in pyrimidine metabolism; dTTP biosynthesis. Its function is as follows. Catalyzes the reductive methylation of 2'-deoxyuridine-5'-monophosphate (dUMP) to 2'-deoxythymidine-5'-monophosphate (dTMP) while utilizing 5,10-methylenetetrahydrofolate (mTHF) as the methyl donor and reductant in the reaction, yielding dihydrofolate (DHF) as a by-product. This enzymatic reaction provides an intracellular de novo source of dTMP, an essential precursor for DNA biosynthesis. This Brucella ovis (strain ATCC 25840 / 63/290 / NCTC 10512) protein is Thymidylate synthase.